Here is a 291-residue protein sequence, read N- to C-terminus: Protease HtpX homolog (291 aa).

2 consecutive transmembrane segments (helical) span residues 4-24 and 38-58; these read VFLFLITNLAVILVLSFSARL and MGMLLAFAALIGFGGSFISLL. H144 contributes to the Zn(2+) binding site. Residue E145 is part of the active site. H148 contacts Zn(2+). Transmembrane regions (helical) follow at residues 159 to 179 and 199 to 219; these read LIQGVVNTFVIFLARVFAYAL and ISSIAFEIVFGILASIVVMYF. E224 serves as a coordination point for Zn(2+).

Belongs to the peptidase M48B family. Zn(2+) is required as a cofactor.

It is found in the cell inner membrane. The chain is Protease HtpX homolog from Chlorobium phaeovibrioides (strain DSM 265 / 1930) (Prosthecochloris vibrioformis (strain DSM 265)).